The following is a 309-amino-acid chain: Protease HtpX homolog (309 aa).

Transmembrane regions (helical) follow at residues 15-35 (NAVL…VDVI) and 54-74 (IFPT…VVCI). H165 contacts Zn(2+). E166 is a catalytic residue. H169 contacts Zn(2+). 2 helical membrane passes run 181-201 (VGIL…FFMG) and 213-233 (MILL…QMYL). Position 238 (E238) interacts with Zn(2+).

This sequence belongs to the peptidase M48B family. Zn(2+) serves as cofactor.

The protein resides in the cell inner membrane. This is Protease HtpX homolog from Helicobacter acinonychis (strain Sheeba).